The primary structure comprises 148 residues: UPF0260 protein mll2411 (148 aa).

It belongs to the UPF0260 family.

In Mesorhizobium japonicum (strain LMG 29417 / CECT 9101 / MAFF 303099) (Mesorhizobium loti (strain MAFF 303099)), this protein is UPF0260 protein mll2411.